The chain runs to 328 residues: MDAVLLEHFPGGLDAFPSSYFDEDDFFTDQSSRDPLEDGDELLADEQAEVEFLSHQLHEYCYRDGACLLLQPAPPAAPLALAPPSSGGLGEPDDGGGGGYCCETGAPPGGFPYSPGSPPSCLAYPCAGAAVLSPGARLRGLSGAAAAAARRRRRVRSEAELQQLRQAANVRERRRMQSINDAFEGLRSHIPTLPYEKRLSKVDTLRLAIGYINFLSELVQADLPLRGGGAGGCGGPGGGGRLGGDSPGSQAQKVIICHRGTRSPSPSDPDYGLPPLAGHSLSWTDEKQLKEQNIIRTAKVWTPEDPRKLNSKSSFNNIENEPPFEFVS.

The 53-residue stretch at 163–215 folds into the bHLH domain; the sequence is QLRQAANVRERRRMQSINDAFEGLRSHIPTLPYEKRLSKVDTLRLAIGYINFL. Disordered regions lie at residues 259-278 and 305-328; these read RGTR…PLAG and DPRK…EFVS.

In terms of assembly, component of the pancreas transcription factor 1 complex (PTF1) which is composed of TCF3/p75, TCF12/p64 and PTF1A/p48. TCF3 is responsible for the nuclear import of the p48/p64 complex. Interacts with TCF3 and RBPSUH/RBP-Jkappa. As to expression, pancreas-specific (at protein level). Loss of expression is seen in ductal type pancreas cancers.

The protein localises to the nucleus. Its subcellular location is the cytoplasm. Transcription factor implicated in the cell fate determination in various organs. Binds to the E-box consensus sequence 5'-CANNTG-3'. Plays a role in early and late pancreas development and differentiation. Important for determining whether cells allocated to the pancreatic buds continue towards pancreatic organogenesis or revert back to duodenal fates. May be involved in the maintenance of exocrine pancreas-specific gene expression including ELA1 and amylase. Required for the formation of pancreatic acinar and ductal cells. Plays an important role in cerebellar development. Directly regulated by FOXN4 and RORC during retinal development, FOXN4-PTF1A pathway plays a central role in directing the differentiation of retinal progenitors towards horizontal and amacrine fates. This is Pancreas transcription factor 1 subunit alpha (PTF1A) from Homo sapiens (Human).